The chain runs to 1363 residues: Zinc finger protein 541 (1363 aa).

2 disordered regions span residues methionine 1 to glutamate 23 and leucine 106 to asparagine 137. 3 consecutive C2H2-type zinc fingers follow at residues leucine 140 to histidine 162, histidine 168 to histidine 190, and phenylalanine 196 to histidine 221. 4 disordered regions span residues glutamate 232–leucine 269, lysine 286–glutamate 387, valine 440–leucine 532, and glutamine 574–leucine 741. Over residues serine 311–serine 321 the composition is skewed to polar residues. The span at glutamate 335–alanine 345 shows a compositional bias: basic and acidic residues. The span at proline 453–serine 465 shows a compositional bias: low complexity. Residues glycine 597–proline 608 show a composition bias toward pro residues. Low complexity predominate over residues proline 659–serine 670. The C2H2-type 4 zinc finger occupies phenylalanine 838–histidine 860. Residues glutamine 935–proline 978 are disordered. Over residues glutamine 937–glutamine 951 the composition is skewed to basic and acidic residues. In terms of domain architecture, ELM2 spans proline 1063–glycine 1155. Residues threonine 1170–lysine 1221 enclose the SANT domain. The tract at residues arginine 1243 to glutamine 1298 is disordered. A compositionally biased stretch (basic and acidic residues) spans threonine 1244 to isoleucine 1276. Residues phenylalanine 1301–histidine 1323 form a C2H2-type 5 zinc finger. Residues leucine 1343 to tryptophan 1363 form a disordered region. Positions glutamate 1345–glycine 1355 are enriched in acidic residues.

As to quaternary structure, interacts with DNTTIP1. Identified in a complex with KCTD19, HDAC1 and HSPA2. Identified in a complex with HDAC1, HDAC2, DNTTIP1 and KCTD19. Identified in a complex with KCTD19 and HDAC1. In terms of tissue distribution, germ-cell-specific. Specifically present in testicular spermatogenic cells, but not in testicular and mature sperm. During spermatogenesis, it is present in spermatocytes and round spermatids only (at protein level).

Its subcellular location is the nucleus. In terms of biological role, transcription regulator which is essential for male fertility and for the completion of meiotic prophase in spermatocytes. Regulates progression of the pachytene stage of meiotic prophase by activating the expression of genes involved in meiosis and post-meiosis during spermatogenesis. Maintains the repression of pre-pachytene transcriptional programs, including meiotic double-strand breaks (DSB) formation genes in pachytene spermatocytes and suppresses aberrant DSB formation after mid-pachytene, thus ensuring meiosis progression. The polypeptide is Zinc finger protein 541 (Znf541) (Mus musculus (Mouse)).